The following is an 831-amino-acid chain: Probable inactive serine/threonine-protein kinase DDB_G0274613 (831 aa).

An RING-type zinc finger spans residues 9–63 (CSICSEEVIDFAAIFSSNKKFGDKACKHNFCVSCLTYLMEYNTRNKKALCCPICR). Positions 83–348 (RKLSSAQIFL…LEEMKLLYQF (266 aa)) form a coiled coil. Positions 414–787 (QIHKVSIGNG…ANQAAFHKFF (374 aa)) constitute a Protein kinase domain. The tract at residues 657 to 703 (NNNNNNNNNNNNNNNNNNNNNNNNNNNNNNNNNNNNNNNNNIESNFN) is disordered.

Belongs to the protein kinase superfamily. CMGC Ser/Thr protein kinase family.

This Dictyostelium discoideum (Social amoeba) protein is Probable inactive serine/threonine-protein kinase DDB_G0274613.